The following is a 529-amino-acid chain: Probable E3 ubiquitin-protein ligase MGRN1 (529 aa).

The RING-type zinc-finger motif lies at 275 to 314 (ECVVCLSDLRDTLILPCRHLCLCNACADTLRYQANNCPIC). 2 disordered regions span residues 341 to 362 (SPVLSQSSDHTEHSNADNIPPG) and 396 to 529 (EMGD…VEEC). Polar residues-rich tracts occupy residues 449–463 (AQPQSVLPCSLSPSE) and 477–487 (NSGSESRSLGV). Low complexity predominate over residues 501 to 511 (SSLSQSESDPS). Residues 520–529 (ESWSTAVEEC) show a composition bias toward polar residues.

Autoubiquitinated in vitro.

The enzyme catalyses S-ubiquitinyl-[E2 ubiquitin-conjugating enzyme]-L-cysteine + [acceptor protein]-L-lysine = [E2 ubiquitin-conjugating enzyme]-L-cysteine + N(6)-ubiquitinyl-[acceptor protein]-L-lysine.. It participates in protein modification; protein ubiquitination. E3 ubiquitin-protein ligase. Also acts as a negative regulator of hedgehog signaling. In Danio rerio (Zebrafish), this protein is Probable E3 ubiquitin-protein ligase MGRN1 (mgrn1).